The primary structure comprises 962 residues: Glycine dehydrogenase (decarboxylating) (962 aa).

At lysine 709 the chain carries N6-(pyridoxal phosphate)lysine.

The protein belongs to the GcvP family. In terms of assembly, the glycine cleavage system is composed of four proteins: P, T, L and H. Pyridoxal 5'-phosphate is required as a cofactor.

The enzyme catalyses N(6)-[(R)-lipoyl]-L-lysyl-[glycine-cleavage complex H protein] + glycine + H(+) = N(6)-[(R)-S(8)-aminomethyldihydrolipoyl]-L-lysyl-[glycine-cleavage complex H protein] + CO2. The glycine cleavage system catalyzes the degradation of glycine. The P protein binds the alpha-amino group of glycine through its pyridoxal phosphate cofactor; CO(2) is released and the remaining methylamine moiety is then transferred to the lipoamide cofactor of the H protein. This Shewanella sp. (strain ANA-3) protein is Glycine dehydrogenase (decarboxylating).